Consider the following 422-residue polypeptide: Gamma-glutamyl phosphate reductase (422 aa).

Belongs to the gamma-glutamyl phosphate reductase family.

Its subcellular location is the cytoplasm. It catalyses the reaction L-glutamate 5-semialdehyde + phosphate + NADP(+) = L-glutamyl 5-phosphate + NADPH + H(+). It participates in amino-acid biosynthesis; L-proline biosynthesis; L-glutamate 5-semialdehyde from L-glutamate: step 2/2. Functionally, catalyzes the NADPH-dependent reduction of L-glutamate 5-phosphate into L-glutamate 5-semialdehyde and phosphate. The product spontaneously undergoes cyclization to form 1-pyrroline-5-carboxylate. The protein is Gamma-glutamyl phosphate reductase of Nitrosomonas eutropha (strain DSM 101675 / C91 / Nm57).